A 214-amino-acid polypeptide reads, in one-letter code: Putative ras-related protein Rab-5B (214 aa).

56-63 (GEMNTGKT) lines the GTP pocket. The short motif at 77–85 (TDSTIGAAF) is the Effector region element. Residues 103–107 (DTAGQ) and 161–164 (NKVD) each bind GTP.

This sequence belongs to the small GTPase superfamily. Rab family. This sequence lacks the C-terminal cysteine motifs subject to isoprenylation in other Rab proteins.

This chain is Putative ras-related protein Rab-5B (rab5B), found in Dictyostelium discoideum (Social amoeba).